Reading from the N-terminus, the 109-residue chain is Spermidine export protein MdtI (109 aa).

4 consecutive transmembrane segments (helical) span residues 6–26 (WVHA…NVFL), 36–56 (IFGL…SQAV), 64–84 (AYAL…WILF), and 88–108 (LNRK…MVKL).

It belongs to the drug/metabolite transporter (DMT) superfamily. Small multidrug resistance (SMR) (TC 2.A.7.1) family. MdtI subfamily. As to quaternary structure, forms a complex with MdtJ.

It is found in the cell inner membrane. In terms of biological role, catalyzes the excretion of spermidine. The polypeptide is Spermidine export protein MdtI (Shigella dysenteriae serotype 1 (strain Sd197)).